A 38-amino-acid chain; its full sequence is Photosystem II reaction center protein L (38 aa).

The chain crosses the membrane as a helical span at residues 17–37 (SLYWGLLLIFVLAVLFSSYFF).

This sequence belongs to the PsbL family. In terms of assembly, PSII is composed of 1 copy each of membrane proteins PsbA, PsbB, PsbC, PsbD, PsbE, PsbF, PsbH, PsbI, PsbJ, PsbK, PsbL, PsbM, PsbT, PsbX, PsbY, PsbZ, Psb30/Ycf12, at least 3 peripheral proteins of the oxygen-evolving complex and a large number of cofactors. It forms dimeric complexes.

It is found in the plastid. The protein localises to the chloroplast thylakoid membrane. One of the components of the core complex of photosystem II (PSII). PSII is a light-driven water:plastoquinone oxidoreductase that uses light energy to abstract electrons from H(2)O, generating O(2) and a proton gradient subsequently used for ATP formation. It consists of a core antenna complex that captures photons, and an electron transfer chain that converts photonic excitation into a charge separation. This subunit is found at the monomer-monomer interface and is required for correct PSII assembly and/or dimerization. This is Photosystem II reaction center protein L from Thalassiosira pseudonana (Marine diatom).